Here is a 137-residue protein sequence, read N- to C-terminus: L-ectoine synthase (137 aa).

A disordered region spans residues 118 to 137 (VHREDGSYAPADEADDQKPL).

This sequence belongs to the ectoine synthase family.

It catalyses the reaction (2S)-4-acetamido-2-aminobutanoate = L-ectoine + H2O. It participates in amine and polyamine biosynthesis; ectoine biosynthesis; L-ectoine from L-aspartate 4-semialdehyde: step 3/3. Its activity is regulated as follows. Seems to require potassium ions for its activity and stability. Slightly inhibited by N-ethylmaleimide. Its function is as follows. Catalyzes the circularization of gamma-N-acetyl-alpha,gamma-diaminobutyric acid (ADABA) to ectoine (1,4,5,6-tetrahydro-2-methyl-4-pyrimidine carboxylic acid), which is an excellent osmoprotectant. Does not act on N-acetylated amino acids like N-alpha-acetyl-L-asparagine,N-alpha-acetyl-L-ornithine, N-alpha-acetyl-L-lysine and N-epsilon-acetyl-L-lysine. This Halomonas elongata (strain ATCC 33173 / DSM 2581 / NBRC 15536 / NCIMB 2198 / 1H9) protein is L-ectoine synthase (ectC).